A 202-amino-acid chain; its full sequence is FMN-dependent NADH:quinone oxidoreductase 1 (202 aa).

Residues serine 9, 15 to 17, 95 to 98, and 139 to 142 contribute to the FMN site; these read SAS, MYNF, and TSGG.

It belongs to the azoreductase type 1 family. In terms of assembly, homodimer. FMN serves as cofactor.

The enzyme catalyses 2 a quinone + NADH + H(+) = 2 a 1,4-benzosemiquinone + NAD(+). The catalysed reaction is N,N-dimethyl-1,4-phenylenediamine + anthranilate + 2 NAD(+) = 2-(4-dimethylaminophenyl)diazenylbenzoate + 2 NADH + 2 H(+). Quinone reductase that provides resistance to thiol-specific stress caused by electrophilic quinones. In terms of biological role, also exhibits azoreductase activity. Catalyzes the reductive cleavage of the azo bond in aromatic azo compounds to the corresponding amines. In Pseudomonas syringae pv. tomato (strain ATCC BAA-871 / DC3000), this protein is FMN-dependent NADH:quinone oxidoreductase 1.